The primary structure comprises 490 residues: Cysteine--tRNA ligase (490 aa).

C43 contributes to the Zn(2+) binding site. The 'HIGH' region signature appears at M45 to H55. The tract at residues V177 to K204 is disordered. A compositionally biased stretch (basic and acidic residues) spans S186 to K204. Residues C228, H253, and E257 each coordinate Zn(2+). Residues K284 to S288 carry the 'KMSKS' region motif. Position 287 (K287) interacts with ATP.

Belongs to the class-I aminoacyl-tRNA synthetase family. In terms of assembly, monomer. It depends on Zn(2+) as a cofactor.

It is found in the cytoplasm. It catalyses the reaction tRNA(Cys) + L-cysteine + ATP = L-cysteinyl-tRNA(Cys) + AMP + diphosphate. This Cutibacterium acnes (strain DSM 16379 / KPA171202) (Propionibacterium acnes) protein is Cysteine--tRNA ligase.